Here is a 247-residue protein sequence, read N- to C-terminus: Sulfate transporter CysZ (247 aa).

A run of 5 helical transmembrane segments spans residues 29 to 49, 66 to 86, 141 to 160, 164 to 186, and 212 to 232; these read FVVL…FYLF, FLSW…LATF, LLYI…IPAL, VGPV…DYPF, and VLVS…PVAI.

Belongs to the CysZ family.

Its subcellular location is the cell inner membrane. Functionally, high affinity, high specificity proton-dependent sulfate transporter, which mediates sulfate uptake. Provides the sulfur source for the cysteine synthesis pathway. The polypeptide is Sulfate transporter CysZ (Vibrio parahaemolyticus serotype O3:K6 (strain RIMD 2210633)).